The sequence spans 208 residues: Small ribosomal subunit protein uS4 (208 aa).

In terms of domain architecture, S4 RNA-binding spans 98–161; that stretch reads QRLDNLVYRM…KNNPQILRAV (64 aa).

Belongs to the universal ribosomal protein uS4 family. Part of the 30S ribosomal subunit. Contacts protein S5. The interaction surface between S4 and S5 is involved in control of translational fidelity.

Its function is as follows. One of the primary rRNA binding proteins, it binds directly to 16S rRNA where it nucleates assembly of the body of the 30S subunit. With S5 and S12 plays an important role in translational accuracy. This Campylobacter hominis (strain ATCC BAA-381 / DSM 21671 / CCUG 45161 / LMG 19568 / NCTC 13146 / CH001A) protein is Small ribosomal subunit protein uS4.